Here is a 491-residue protein sequence, read N- to C-terminus: Malonate-semialdehyde dehydrogenase 1 (491 aa).

Positions 154, 156, 180, 183, 184, 233, and 255 each coordinate NAD(+). Cysteine 288 serves as the catalytic Nucleophile. NAD(+) is bound at residue glutamate 386.

It belongs to the aldehyde dehydrogenase family. IolA subfamily. Homotetramer.

The catalysed reaction is 3-oxopropanoate + NAD(+) + CoA + H2O = hydrogencarbonate + acetyl-CoA + NADH + H(+). It carries out the reaction 2-methyl-3-oxopropanoate + NAD(+) + CoA + H2O = propanoyl-CoA + hydrogencarbonate + NADH + H(+). The protein operates within polyol metabolism; myo-inositol degradation into acetyl-CoA; acetyl-CoA from myo-inositol: step 7/7. Its function is as follows. Catalyzes the oxidation of malonate semialdehyde (MSA) and methylmalonate semialdehyde (MMSA) into acetyl-CoA and propanoyl-CoA, respectively. Is involved in a myo-inositol catabolic pathway. Bicarbonate, and not CO2, is the end-product of the enzymatic reaction. This chain is Malonate-semialdehyde dehydrogenase 1, found in Shouchella clausii (strain KSM-K16) (Alkalihalobacillus clausii).